The primary structure comprises 148 residues: Large ribosomal subunit protein bL9 (148 aa).

The protein belongs to the bacterial ribosomal protein bL9 family.

Functionally, binds to the 23S rRNA. The chain is Large ribosomal subunit protein bL9 from Finegoldia magna (strain ATCC 29328 / DSM 20472 / WAL 2508) (Peptostreptococcus magnus).